The chain runs to 86 residues: YcgL domain-containing protein XC_4086 (86 aa).

In terms of domain architecture, YcgL spans 1-83 (MHAYVYKSQR…PKTVVLAGEC (83 aa)).

The protein is YcgL domain-containing protein XC_4086 of Xanthomonas campestris pv. campestris (strain 8004).